The sequence spans 292 residues: MTPNPMTNDLPDPAAAPDSAPLYSPARVRALLAAHGLKPTKSLGQNFLIDGNILRAIAEAGGAAPGENVLEIGPGLGVLTREVASRGARVTALEKDERLRPVLAETLAGLDVNVIWGDALDFDYAALPAGTRVIANLPYYITGLLLTRFMQAPGVVSATVLVQKEVAQRLVAQPGQDNYGFLSAVAALYGSVKHVRDVPKGAFFPAPDVTSSVVRLDFDRTRPQPDPAFVSFVDNALRYRRKTLRNNLRMMGHSGEAIDAALSDLGLRPDVRAEDVPLSGLRAVAAALGVVR.

S-adenosyl-L-methionine is bound by residues N46, L48, G73, E94, D118, and N136.

This sequence belongs to the class I-like SAM-binding methyltransferase superfamily. rRNA adenine N(6)-methyltransferase family. RsmA subfamily.

The protein localises to the cytoplasm. It carries out the reaction adenosine(1518)/adenosine(1519) in 16S rRNA + 4 S-adenosyl-L-methionine = N(6)-dimethyladenosine(1518)/N(6)-dimethyladenosine(1519) in 16S rRNA + 4 S-adenosyl-L-homocysteine + 4 H(+). Specifically dimethylates two adjacent adenosines (A1518 and A1519) in the loop of a conserved hairpin near the 3'-end of 16S rRNA in the 30S particle. May play a critical role in biogenesis of 30S subunits. This Deinococcus radiodurans (strain ATCC 13939 / DSM 20539 / JCM 16871 / CCUG 27074 / LMG 4051 / NBRC 15346 / NCIMB 9279 / VKM B-1422 / R1) protein is Ribosomal RNA small subunit methyltransferase A.